The following is a 263-amino-acid chain: uncharacterized protein (263 aa).

Positions 22-44 (IDGSDDQSDRTRSSSGDSTSNSL) are disordered. Residues 34 to 43 (SSSGDSTSNS) are compositionally biased toward low complexity.

Its subcellular location is the mitochondrion. This is an uncharacterized protein from Schizosaccharomyces pombe (strain 972 / ATCC 24843) (Fission yeast).